Consider the following 188-residue polypeptide: Acireductone dioxygenase 1 (188 aa).

The Fe(2+) site is built by His-90, His-92, Glu-96, and His-135. Positions 90, 92, 96, and 135 each coordinate Ni(2+).

It belongs to the acireductone dioxygenase (ARD) family. Fe(2+) is required as a cofactor. Ni(2+) serves as cofactor.

The protein resides in the cytoplasm. The protein localises to the nucleus. It catalyses the reaction 1,2-dihydroxy-5-(methylsulfanyl)pent-1-en-3-one + O2 = 4-methylsulfanyl-2-oxobutanoate + formate + 2 H(+). The catalysed reaction is 1,2-dihydroxy-5-(methylsulfanyl)pent-1-en-3-one + O2 = 3-(methylsulfanyl)propanoate + CO + formate + 2 H(+). It participates in amino-acid biosynthesis; L-methionine biosynthesis via salvage pathway; L-methionine from S-methyl-5-thio-alpha-D-ribose 1-phosphate: step 5/6. Its function is as follows. Catalyzes 2 different reactions between oxygen and the acireductone 1,2-dihydroxy-3-keto-5-methylthiopentene (DHK-MTPene) depending upon the metal bound in the active site. Fe-containing acireductone dioxygenase (Fe-ARD) produces formate and 2-keto-4-methylthiobutyrate (KMTB), the alpha-ketoacid precursor of methionine in the methionine recycle pathway. Ni-containing acireductone dioxygenase (Ni-ARD) produces methylthiopropionate, carbon monoxide and formate, and does not lie on the methionine recycle pathway. The chain is Acireductone dioxygenase 1 from Vitis vinifera (Grape).